Here is a 450-residue protein sequence, read N- to C-terminus: Asparagine--tRNA ligase (450 aa).

Belongs to the class-II aminoacyl-tRNA synthetase family. As to quaternary structure, homodimer.

It is found in the cytoplasm. The catalysed reaction is tRNA(Asn) + L-asparagine + ATP = L-asparaginyl-tRNA(Asn) + AMP + diphosphate + H(+). This is Asparagine--tRNA ligase from Metamycoplasma arthritidis (strain 158L3-1) (Mycoplasma arthritidis).